Consider the following 55-residue polypeptide: Accessory gland-specific peptide 70A (55 aa).

Positions 1-19 are cleaved as a signal peptide; the sequence is MKTLSLFLVLVCLLGLVQS. Hydroxyproline occurs at positions 28, 32, 34, and 38. Cysteine 43 and cysteine 55 are joined by a disulfide.

Main cells of the accessory glands of males (paragonial gland).

The protein localises to the secreted. Functionally, represses female sexual receptivity and stimulates oviposition. This is Accessory gland-specific peptide 70A (Acp70A) from Drosophila mauritiana (Fruit fly).